The primary structure comprises 206 residues: Outer-membrane lipoprotein carrier protein (206 aa).

The signal sequence occupies residues Met-1–Ala-21.

The protein belongs to the LolA family. As to quaternary structure, monomer.

The protein localises to the periplasm. Functionally, participates in the translocation of lipoproteins from the inner membrane to the outer membrane. Only forms a complex with a lipoprotein if the residue after the N-terminal Cys is not an aspartate (The Asp acts as a targeting signal to indicate that the lipoprotein should stay in the inner membrane). The protein is Outer-membrane lipoprotein carrier protein of Shewanella sp. (strain MR-4).